The chain runs to 334 residues: MIEADRIISPNATLQEDSQDRAIRPKRLEDYVGQPQVREQMEIFINAARGRQEALDHTLIFGPPGLGKTTLANIIANEMDVSIKTTSGPVLEKAGDLAALLTNLEPKDVLFIDEIHRLSAAVEEVLYPAMEDYQLDIMIGEGPAARSIKLDLPPFTLVGATTRAGLLTSPLRDRFGIVQRLEFYSVEDLRHIVARSASLLGVSIDDGGAHEIARRSRGTPRIANRLLRRVRDYAEVKADGAITNEVADKALNMLNVDLHGFDHMDRRLLLAVMEKFDGGPVGVESLAAAIGEEKGTIEDVVEPYLIQQGFLMRTPRGRVATQAAYNHFGLTMPE.

Residues 4-184 are large ATPase domain (RuvB-L); it reads ADRIISPNAT…FGIVQRLEFY (181 aa). ATP is bound by residues isoleucine 23, arginine 24, glycine 65, lysine 68, threonine 69, threonine 70, 131–133, arginine 174, tyrosine 184, and arginine 221; that span reads EDY. Threonine 69 is a Mg(2+) binding site. Positions 185–255 are small ATPAse domain (RuvB-S); the sequence is SVEDLRHIVA…VADKALNMLN (71 aa). The head domain (RuvB-H) stretch occupies residues 258-334; that stretch reads LHGFDHMDRR…YNHFGLTMPE (77 aa). Arginine 313 and arginine 318 together coordinate DNA.

The protein belongs to the RuvB family. Homohexamer. Forms an RuvA(8)-RuvB(12)-Holliday junction (HJ) complex. HJ DNA is sandwiched between 2 RuvA tetramers; dsDNA enters through RuvA and exits via RuvB. An RuvB hexamer assembles on each DNA strand where it exits the tetramer. Each RuvB hexamer is contacted by two RuvA subunits (via domain III) on 2 adjacent RuvB subunits; this complex drives branch migration. In the full resolvosome a probable DNA-RuvA(4)-RuvB(12)-RuvC(2) complex forms which resolves the HJ.

The protein resides in the cytoplasm. The enzyme catalyses ATP + H2O = ADP + phosphate + H(+). In terms of biological role, the RuvA-RuvB-RuvC complex processes Holliday junction (HJ) DNA during genetic recombination and DNA repair, while the RuvA-RuvB complex plays an important role in the rescue of blocked DNA replication forks via replication fork reversal (RFR). RuvA specifically binds to HJ cruciform DNA, conferring on it an open structure. The RuvB hexamer acts as an ATP-dependent pump, pulling dsDNA into and through the RuvAB complex. RuvB forms 2 homohexamers on either side of HJ DNA bound by 1 or 2 RuvA tetramers; 4 subunits per hexamer contact DNA at a time. Coordinated motions by a converter formed by DNA-disengaged RuvB subunits stimulates ATP hydrolysis and nucleotide exchange. Immobilization of the converter enables RuvB to convert the ATP-contained energy into a lever motion, pulling 2 nucleotides of DNA out of the RuvA tetramer per ATP hydrolyzed, thus driving DNA branch migration. The RuvB motors rotate together with the DNA substrate, which together with the progressing nucleotide cycle form the mechanistic basis for DNA recombination by continuous HJ branch migration. Branch migration allows RuvC to scan DNA until it finds its consensus sequence, where it cleaves and resolves cruciform DNA. The sequence is that of Holliday junction branch migration complex subunit RuvB from Hahella chejuensis (strain KCTC 2396).